A 951-amino-acid polypeptide reads, in one-letter code: Protocadherin-20 (951 aa).

The signal sequence occupies residues 1–60 (MRGRGNARSSQALGVSWCPATWHPRLDMGRLHRPRSSTSYRNLPHLFLFFLFVGPFSCLG). The Extracellular segment spans residues 61 to 890 (SYSRATELLY…VESVSCMPTL (830 aa)). Cadherin domains lie at 64–209 (RATE…APQF), 210–320 (PVSQ…CPLF), 321–535 (TDSQ…APIF), 536–639 (LQPL…SPRF), 640–742 (INKD…PPLV), and 746–863 (QSNM…EPEI). The N-linked (GlcNAc...) asparagine glycan is linked to N135. N-linked (GlcNAc...) asparagine glycans are attached at residues N326 and N332. N-linked (GlcNAc...) asparagine glycans are attached at residues N680, N748, N803, N844, and N849. A helical transmembrane segment spans residues 891–911 (VALSVISLGSITLVTGMGIYI). Residues 912–951 (CLRKGEKHPREDENLEVQIPLKGKIDLHMRERKPMDISNI) lie on the Cytoplasmic side of the membrane.

It localises to the cell membrane. Potential calcium-dependent cell-adhesion protein. The sequence is that of Protocadherin-20 (PCDH20) from Homo sapiens (Human).